Reading from the N-terminus, the 719-residue chain is Penicillin-binding protein 1A (719 aa).

Residues 62–223 (LIADLGSERR…NQYDPYSHPE (162 aa)) form a transglycosylase region. E91 acts as the Proton donor; for transglycosylase activity in catalysis. A transpeptidase region spans residues 297-611 (DVYTNVDQEA…RLTPLVGNGL (315 aa)). S370 acts as the Acyl-ester intermediate; for transpeptidase activity in catalysis. The disordered stretch occupies residues 652 to 719 (ARSTWSSPAP…QNQNPQPAQP (68 aa)). Low complexity predominate over residues 654-719 (STWSSPAPQQ…QNQNPQPAQP (66 aa)).

This sequence in the N-terminal section; belongs to the glycosyltransferase 51 family. The protein in the C-terminal section; belongs to the transpeptidase family. As to quaternary structure, interacts with MreC in the elongasome.

The protein resides in the secreted. It catalyses the reaction [GlcNAc-(1-&gt;4)-Mur2Ac(oyl-L-Ala-gamma-D-Glu-L-Lys-D-Ala-D-Ala)](n)-di-trans,octa-cis-undecaprenyl diphosphate + beta-D-GlcNAc-(1-&gt;4)-Mur2Ac(oyl-L-Ala-gamma-D-Glu-L-Lys-D-Ala-D-Ala)-di-trans,octa-cis-undecaprenyl diphosphate = [GlcNAc-(1-&gt;4)-Mur2Ac(oyl-L-Ala-gamma-D-Glu-L-Lys-D-Ala-D-Ala)](n+1)-di-trans,octa-cis-undecaprenyl diphosphate + di-trans,octa-cis-undecaprenyl diphosphate + H(+). The enzyme catalyses Preferential cleavage: (Ac)2-L-Lys-D-Ala-|-D-Ala. Also transpeptidation of peptidyl-alanyl moieties that are N-acyl substituents of D-alanine.. Its pathway is cell wall biogenesis; peptidoglycan biosynthesis. Functionally, cell wall formation. The sequence is that of Penicillin-binding protein 1A (pbpA) from Streptococcus pneumoniae (strain ATCC BAA-255 / R6).